The following is a 446-amino-acid chain: WD repeat domain phosphoinositide-interacting protein 1 (446 aa).

WD repeat units lie at residues 3–42 (AEAA…LFSL), 47–88 (QLDQ…VYHF), 92–126 (TEIC…IHNI), 131–173 (LLKT…LYDG), 177–216 (KTVC…VFSV), 222–261 (LYEF…IFKL), and 304–343 (FATA…MYNL). Positions 131 to 136 (LLKTLL) match the Nuclear receptor interaction motif. Positions 225 to 228 (FRRG) match the L/FRRG motif motif. A disordered region spans residues 386 to 406 (ARPSASSASTVPGYSEDGGAL).

The protein belongs to the WD repeat PROPPIN family. As to quaternary structure, interacts with androgen receptor (AR) and the estrogen receptors ESR1 and ESR2. Interacts with WIPI2. Interacts with WDR45. Interacts with ATG16L1. May interact with NUDC. As to expression, ubiquitously expressed. Highly expressed in skeletal muscle, heart, testis, pancreas and placenta. Highly expressed in G361, Sk-mel-28, Sk-mel-13, WM852 and WM451 cells. Up-regulated in a variety of tumor tissues.

The protein resides in the golgi apparatus. It localises to the trans-Golgi network. It is found in the endosome. Its subcellular location is the cytoplasmic vesicle. The protein localises to the clathrin-coated vesicle. The protein resides in the preautophagosomal structure membrane. It localises to the cytoplasm. It is found in the cytoskeleton. Functionally, component of the autophagy machinery that controls the major intracellular degradation process by which cytoplasmic materials are packaged into autophagosomes and delivered to lysosomes for degradation. Plays an important role in starvation- and calcium-mediated autophagy, as well as in mitophagy. Functions downstream of the ULK1 and PI3-kinases that produce phosphatidylinositol 3-phosphate (PtdIns3P) on membranes of the endoplasmic reticulum once activated. Binds phosphatidylinositol 3-phosphate (PtdIns3P), and maybe other phosphoinositides including PtdIns3,5P2 and PtdIns5P, and is recruited to phagophore assembly sites at the endoplasmic reticulum membranes. There, it assists WIPI2 in the recruitment of ATG12-ATG5-ATG16L1, a complex that directly controls the elongation of the nascent autophagosomal membrane. Together with WDR45/WIPI4, promotes ATG2 (ATG2A or ATG2B)-mediated lipid transfer by enhancing ATG2-association with phosphatidylinositol 3-monophosphate (PI3P)-containing membranes. Involved in xenophagy of Staphylococcus aureus. Invading S.aureus cells become entrapped in autophagosome-like WIPI1 positive vesicles targeted for lysosomal degradation. Also plays a distinct role in controlling the transcription of melanogenic enzymes and melanosome maturation, a process that is distinct from starvation-induced autophagy. May also regulate the trafficking of proteins involved in the mannose-6-phosphate receptor (MPR) recycling pathway. The sequence is that of WD repeat domain phosphoinositide-interacting protein 1 (WIPI1) from Homo sapiens (Human).